Reading from the N-terminus, the 128-residue chain is Small ribosomal subunit protein bS6 (128 aa).

The segment at 105–128 (AKVTEEEPVEAAPEAKVETTTEEE) is disordered. Basic and acidic residues predominate over residues 117 to 128 (PEAKVETTTEEE).

The protein belongs to the bacterial ribosomal protein bS6 family.

Binds together with bS18 to 16S ribosomal RNA. This Geotalea daltonii (strain DSM 22248 / JCM 15807 / FRC-32) (Geobacter daltonii) protein is Small ribosomal subunit protein bS6.